We begin with the raw amino-acid sequence, 246 residues long: MADS-box transcription factor 14 (246 aa).

The MADS-box domain occupies 1–61 (MGRGKVQLKR…GKLYEYATDS (61 aa)). A K-box domain is found at 88–178 (QGNWCHEYRK…QKELVEKQKV (91 aa)). Residues 180 to 199 (KQQVQWDQTQPQTSSSSSSF) form a disordered region.

As to quaternary structure, may interact with the K-box of MADS1 and MADS6. Highly expressed in sterile lemmas, at intermediate levels in stamens, and weakly in lemmas, paleas and carpels.

The protein localises to the nucleus. Probable transcription factor. May be involved in the control of flowering time. This is MADS-box transcription factor 14 (MADS14) from Oryza sativa subsp. japonica (Rice).